The chain runs to 48 residues: Probable antitoxin PhoAT (48 aa).

Belongs to the PhoAT antitoxin family. As to quaternary structure, interacts with toxin PhoH2.

Probable antitoxin component of a type II toxin-antitoxin (TA) system. The probable cognate antitoxin is PhoAT; the toxin gene can be expressed in the absence of the antitoxin gene in M.smegmatis strain mc(2)155. The protein is Probable antitoxin PhoAT of Mycolicibacterium smegmatis (strain ATCC 700084 / mc(2)155) (Mycobacterium smegmatis).